A 205-amino-acid polypeptide reads, in one-letter code: Dephospho-CoA kinase (205 aa).

The 200-residue stretch at 4 to 203 (KIGITGGIGS…QKIHYLCSAK (200 aa)) folds into the DPCK domain. 12–17 (GSGKSV) contacts ATP.

The protein belongs to the CoaE family.

Its subcellular location is the cytoplasm. It carries out the reaction 3'-dephospho-CoA + ATP = ADP + CoA + H(+). It participates in cofactor biosynthesis; coenzyme A biosynthesis; CoA from (R)-pantothenate: step 5/5. In terms of biological role, catalyzes the phosphorylation of the 3'-hydroxyl group of dephosphocoenzyme A to form coenzyme A. This Bacteroides fragilis (strain ATCC 25285 / DSM 2151 / CCUG 4856 / JCM 11019 / LMG 10263 / NCTC 9343 / Onslow / VPI 2553 / EN-2) protein is Dephospho-CoA kinase.